We begin with the raw amino-acid sequence, 950 residues long: Translation initiation factor IF-2 (950 aa).

Composition is skewed to basic and acidic residues over residues 128–158 (KPKV…EAKA), 165–186 (AEVK…EKKK), 200–234 (KRAE…DNRR), and 291–312 (NRRD…DGNR). Positions 128–354 (KPKVAEPVKK…NNQSSSVPAT (227 aa)) are disordered. 2 stretches are compositionally biased toward polar residues: residues 322–336 (NRNQ…NWNQ) and 343–353 (YQNNQSSSVPA). One can recognise a tr-type G domain in the interval 448 to 619 (ERPAVVTIMG…LLVAEVQELK (172 aa)). Residues 457 to 464 (GHVDHGKT) form a G1 region. 457 to 464 (GHVDHGKT) lines the GTP pocket. The G2 stretch occupies residues 482–486 (GITQH). Residues 503-506 (DTPG) form a G3 region. Residues 503 to 507 (DTPGH) and 557 to 560 (NKID) each bind GTP. The segment at 557–560 (NKID) is G4. Positions 595–597 (SAK) are G5.

The protein belongs to the TRAFAC class translation factor GTPase superfamily. Classic translation factor GTPase family. IF-2 subfamily.

It localises to the cytoplasm. One of the essential components for the initiation of protein synthesis. Protects formylmethionyl-tRNA from spontaneous hydrolysis and promotes its binding to the 30S ribosomal subunits. Also involved in the hydrolysis of GTP during the formation of the 70S ribosomal complex. The chain is Translation initiation factor IF-2 from Lactococcus lactis subsp. cremoris (strain MG1363).